Consider the following 427-residue polypeptide: MKVTVGRSGVHGEIFAPASKSYTHRAITVAALSKESIIHRPLISADTQSTIKACEMLGAYIEKDGDKLLISGVDGEPQTPDNVIDVGNSGTTLRFMTAIAALGQGTTVLTGDNSIRSRPNGPLLQVLNDLGVQSISTRGDGCAPIVVTGGLKGAIAKIDGSISSQFISALLLACPLTKNSTTLSIKGELKSRPYVDVTLDILEKAGAEIYLEDNQNLKFIIPGNQKYRLKEYTVPGDFSSASYLLAAAAMTDTKIKVNNLYPSMQGDAAIIDILKEMGANIYWNKEEGTVEVNGGKLHGITMDAGATPDLVPTVAVLGAVAEGETVITNAEHVRYKETDRLHAMAVELDKMGISTSEEKDKLTIKGGELKGADVHGWHDHRIVMSLTLAGMIAGDTTIDTAEAIFISYPNFFDSMRSIGADVILSEQ.

Positions 20, 21, and 25 each coordinate 3-phosphoshikimate. Phosphoenolpyruvate is bound at residue Lys-20. Phosphoenolpyruvate-binding residues include Gly-90 and Arg-118. 6 residues coordinate 3-phosphoshikimate: Ser-163, Ser-164, Gln-165, Ser-191, Asp-309, and Lys-336. Gln-165 contacts phosphoenolpyruvate. Asp-309 (proton acceptor) is an active-site residue. Arg-340 and Arg-381 together coordinate phosphoenolpyruvate.

The protein belongs to the EPSP synthase family. Monomer.

The protein resides in the cytoplasm. The enzyme catalyses 3-phosphoshikimate + phosphoenolpyruvate = 5-O-(1-carboxyvinyl)-3-phosphoshikimate + phosphate. It functions in the pathway metabolic intermediate biosynthesis; chorismate biosynthesis. Catalyzes the transfer of the enolpyruvyl moiety of phosphoenolpyruvate (PEP) to the 5-hydroxyl of shikimate-3-phosphate (S3P) to produce enolpyruvyl shikimate-3-phosphate and inorganic phosphate. This is 3-phosphoshikimate 1-carboxyvinyltransferase from Methanococcoides burtonii (strain DSM 6242 / NBRC 107633 / OCM 468 / ACE-M).